The following is a 472-amino-acid chain: Serine/threonine-protein kinase sax-1 (472 aa).

One can recognise a Protein kinase domain in the interval 87–381 (FESLKVIGRG…LDEIKQCPFF (295 aa)). ATP-binding positions include 93–101 (IGRGAFGEV) and K116. D210 (proton acceptor) is an active-site residue. Residues 382–452 (RRIDWNHIRE…KRFDGLTQKM (71 aa)) form the AGC-kinase C-terminal domain.

This sequence belongs to the protein kinase superfamily. AGC Ser/Thr protein kinase family. The cofactor is Mg(2+).

The protein localises to the cytoplasm. It localises to the nucleus. It carries out the reaction L-seryl-[protein] + ATP = O-phospho-L-seryl-[protein] + ADP + H(+). The enzyme catalyses L-threonyl-[protein] + ATP = O-phospho-L-threonyl-[protein] + ADP + H(+). Its function is as follows. Acts with sax-2 to restrict the growth of both primary and secondary neurites. Regulates mechanosensory tiling by controlling the termination point of sensory dendrites. The sequence is that of Serine/threonine-protein kinase sax-1 from Caenorhabditis briggsae.